The following is an 815-amino-acid chain: Serotype-specific mannosyltransferase WbdA (815 aa).

Residues M1–E374 are alpha-(1-&gt;2)-mannosyltransferase. Residues K431–K804 are alpha-(1-&gt;3)-mannosyltransferase.

This sequence belongs to the glycosyltransferase group 1 family. Glycosyltransferase 4 subfamily. In terms of assembly, monomer. Interacts with the C-terminal region of WbdD.

Its subcellular location is the cell inner membrane. The enzyme catalyses [alpha-D-Man-(1-&gt;3)-alpha-D-Man-(1-&gt;3)-alpha-D-Man-(1-&gt;2)-alpha-D-Man-(1-&gt;2)](n)-alpha-D-Man-(1-&gt;3)-alpha-D-Man-(1-&gt;3)-alpha-D-Man-(1-&gt;3)-alpha-D-GlcNAc-di-trans,octa-cis-undecaprenyl diphosphate + 2 GDP-alpha-D-mannose = alpha-D-Man-(1-&gt;2)-alpha-D-Man-(1-&gt;2)-[alpha-D-Man-(1-&gt;3)-alpha-D-Man-(1-&gt;3)-alpha-D-Man-(1-&gt;2)-alpha-D-Man-(1-&gt;2)](n)-alpha-D-Man-(1-&gt;3)-alpha-D-Man-(1-&gt;3)-alpha-D-Man-(1-&gt;3)-alpha-D-GlcNAc-di-trans,octa-cis-undecaprenyl diphosphate + 2 GDP + 2 H(+). The catalysed reaction is alpha-D-Man-(1-&gt;2)-alpha-D-Man-(1-&gt;2)-[alpha-D-Man-(1-&gt;3)-alpha-D-Man-(1-&gt;3)-alpha-D-Man-(1-&gt;2)-alpha-D-Man-(1-&gt;2)](n)-alpha-D-Man-(1-&gt;3)-alpha-D-Man-(1-&gt;3)-alpha-D-Man-(1-&gt;3)-alpha-D-GlcNAc-di-trans,octa-cis-undecaprenyl diphosphate + 2 GDP-alpha-D-mannose = [alpha-D-Man-(1-&gt;3)-alpha-D-Man-(1-&gt;3)-alpha-D-Man-(1-&gt;2)-alpha-D-Man-(1-&gt;2)](n+1)-alpha-D-Man-(1-&gt;3)-alpha-D-Man-(1-&gt;3)-alpha-D-Man-(1-&gt;3)-alpha-D-GlcNAc-di-trans,octa-cis-undecaprenyl diphosphate + 2 GDP + 2 H(+). It functions in the pathway bacterial outer membrane biogenesis; LPS O-antigen biosynthesis. Its function is as follows. Mannosyltransferase involved in the biosynthesis of the repeat unit of the lipopolysaccharide (LPS) O-antigen region. Catalyzes the polymerization of a tetrasaccharide repeat unit containing two alpha-(1-&gt;3)- and two alpha-(1-&gt;2)-linked mannopyranose residues. The protein is Serotype-specific mannosyltransferase WbdA of Escherichia coli.